The chain runs to 665 residues: Probable potassium transport system protein Kup 2 (665 aa).

The next 13 membrane-spanning stretches (helical) occupy residues 13–33 (GLLV…LYVM), 55–75 (ISLI…LIAL), 98–118 (WLVL…TLTP), 138–158 (IPVP…LFLF), 167–187 (IIGK…GLTG), 195–215 (LSLL…SPAN), 217–237 (VGVL…ALYS), 250–270 (SWPY…VWIL), 295–315 (FFAI…LITG), 344–364 (IFIP…VFLF), 375–395 (GLAI…YLSL), 400–420 (ILLR…FLIS), and 428–448 (GGYV…IWYF).

It belongs to the HAK/KUP transporter (TC 2.A.72) family.

It localises to the cell membrane. The catalysed reaction is K(+)(in) + H(+)(in) = K(+)(out) + H(+)(out). Transport of potassium into the cell. Likely operates as a K(+):H(+) symporter. The polypeptide is Probable potassium transport system protein Kup 2 (Lactobacillus johnsonii (strain CNCM I-12250 / La1 / NCC 533)).